Here is a 282-residue protein sequence, read N- to C-terminus: NH(3)-dependent NAD(+) synthetase (282 aa).

51–58 is a binding site for ATP; sequence GISGGVDS. Aspartate 57 serves as a coordination point for Mg(2+). Deamido-NAD(+) is bound at residue arginine 148. Threonine 168 provides a ligand contact to ATP. Residue glutamate 173 participates in Mg(2+) binding. Residues lysine 181 and aspartate 188 each contribute to the deamido-NAD(+) site. The ATP site is built by lysine 197 and threonine 219. 268 to 269 provides a ligand contact to deamido-NAD(+); sequence HK.

It belongs to the NAD synthetase family. In terms of assembly, homodimer.

The enzyme catalyses deamido-NAD(+) + NH4(+) + ATP = AMP + diphosphate + NAD(+) + H(+). Its pathway is cofactor biosynthesis; NAD(+) biosynthesis; NAD(+) from deamido-NAD(+) (ammonia route): step 1/1. Functionally, catalyzes the ATP-dependent amidation of deamido-NAD to form NAD. Uses ammonia as a nitrogen source. The polypeptide is NH(3)-dependent NAD(+) synthetase (Burkholderia cenocepacia (strain ATCC BAA-245 / DSM 16553 / LMG 16656 / NCTC 13227 / J2315 / CF5610) (Burkholderia cepacia (strain J2315))).